The following is a 529-amino-acid chain: GMP synthase [glutamine-hydrolyzing] (529 aa).

In terms of domain architecture, Glutamine amidotransferase type-1 spans 17 to 206; sequence TILVLDFGSQ…AIDICQASNN (190 aa). The active-site Nucleophile is Cys93. Catalysis depends on residues His180 and Glu182. Positions 207-404 constitute a GMPS ATP-PPase domain; that stretch reads WTMENFIDTE…MGVPHDLVWR (198 aa). 235–241 is a binding site for ATP; it reads SGGVDST. XMP contacts are provided by Arg308, Asp466, Lys521, and Glu527.

In terms of assembly, homodimer. It depends on Mg(2+) as a cofactor.

It is found in the cytoplasm. The protein localises to the cytosol. The enzyme catalyses XMP + L-glutamine + ATP + H2O = GMP + L-glutamate + AMP + diphosphate + 2 H(+). It functions in the pathway purine metabolism; GMP biosynthesis; GMP from XMP (L-Gln route): step 1/1. Its function is as follows. Catalyzes the conversion of xanthine monophosphate (XMP) to GMP in the presence of glutamine and ATP through an adenyl-XMP intermediate. The protein is GMP synthase [glutamine-hydrolyzing] (GUA1) of Debaryomyces hansenii (strain ATCC 36239 / CBS 767 / BCRC 21394 / JCM 1990 / NBRC 0083 / IGC 2968) (Yeast).